Reading from the N-terminus, the 291-residue chain is Formamidopyrimidine-DNA glycosylase (291 aa).

The active-site Schiff-base intermediate with DNA is the Pro2. Glu3 (proton donor) is an active-site residue. Lys60 functions as the Proton donor; for beta-elimination activity in the catalytic mechanism. Residues His108 and Arg127 each coordinate DNA. The FPG-type zinc-finger motif lies at 257-291; sequence WVYRRGGQACRICSTPIRRESLCGRGTHWCPNCQR. Residue Arg281 is the Proton donor; for delta-elimination activity of the active site.

The protein belongs to the FPG family. In terms of assembly, monomer. Requires Zn(2+) as cofactor.

The catalysed reaction is Hydrolysis of DNA containing ring-opened 7-methylguanine residues, releasing 2,6-diamino-4-hydroxy-5-(N-methyl)formamidopyrimidine.. The enzyme catalyses 2'-deoxyribonucleotide-(2'-deoxyribose 5'-phosphate)-2'-deoxyribonucleotide-DNA = a 3'-end 2'-deoxyribonucleotide-(2,3-dehydro-2,3-deoxyribose 5'-phosphate)-DNA + a 5'-end 5'-phospho-2'-deoxyribonucleoside-DNA + H(+). Involved in base excision repair of DNA damaged by oxidation or by mutagenic agents. Acts as a DNA glycosylase that recognizes and removes damaged bases. Has a preference for oxidized purines, such as 7,8-dihydro-8-oxoguanine (8-oxoG). Has AP (apurinic/apyrimidinic) lyase activity and introduces nicks in the DNA strand. Cleaves the DNA backbone by beta-delta elimination to generate a single-strand break at the site of the removed base with both 3'- and 5'-phosphates. The chain is Formamidopyrimidine-DNA glycosylase from Prochlorococcus marinus (strain MIT 9313).